A 323-amino-acid chain; its full sequence is Lipid A biosynthesis myristoyltransferase (323 aa).

The chain crosses the membrane as a helical span at residues 23–43 (YWGAWLGVAAMAGIALTPPKF). The HXXXXD motif motif lies at 139 to 144 (HGWAVD).

Belongs to the LpxL/LpxM/LpxP family. LpxM subfamily.

It localises to the cell inner membrane. It carries out the reaction alpha-Kdo-(2-&gt;4)-alpha-Kdo-(2-&gt;6)-(dodecanoyl)-lipid IVA (E. coli) + tetradecanoyl-[ACP] = alpha-Kdo-(2-&gt;4)-alpha-Kdo-(2-&gt;6)-lipid A (E. coli) + holo-[ACP]. The enzyme catalyses (9Z)-hexadecenoyl-(Kdo)2-lipid IVA (E. coli) + tetradecanoyl-[ACP] = ((9Z)-hexadecenoyl-tetradecanoyl)-(Kdo)2-lipid A + holo-[ACP]. Its pathway is glycolipid biosynthesis; KDO(2)-lipid A biosynthesis; KDO(2)-lipid A from CMP-3-deoxy-D-manno-octulosonate and lipid IV(A): step 4/4. It participates in bacterial outer membrane biogenesis; lipopolysaccharide biosynthesis. Functionally, catalyzes the transfer of myristate from myristoyl-[acyl-carrier-protein] (ACP) to Kdo(2)-(lauroyl)-lipid IV(A) to form Kdo(2)-lipid A. Can probably also catalyze the transfer of myristate to Kdo(2)-(palmitoleoyl)-lipid IV(A) to form the cold-adapted Kdo(2)-lipid A. In vitro, can acylate Kdo(2)-lipid IV(A), but acylation of (KDO)2-(lauroyl)-lipid IV(A) is about 100 times faster. In vitro, can use lauroyl-ACP but displays a slight kinetic preference for myristoyl-ACP. The polypeptide is Lipid A biosynthesis myristoyltransferase (Escherichia coli (strain K12)).